The following is a 314-amino-acid chain: Ribosomal RNA small subunit methyltransferase H (314 aa).

S-adenosyl-L-methionine-binding positions include 36 to 38, Asp-56, Phe-80, Asp-102, and Gln-109; that span reads GGH. A disordered region spans residues 278–300; that stretch reads GGRSLKSIGKMKPSEEEVADNPR. A compositionally biased stretch (basic and acidic residues) spans 289–300; sequence KPSEEEVADNPR.

It belongs to the methyltransferase superfamily. RsmH family.

It is found in the cytoplasm. The catalysed reaction is cytidine(1402) in 16S rRNA + S-adenosyl-L-methionine = N(4)-methylcytidine(1402) in 16S rRNA + S-adenosyl-L-homocysteine + H(+). In terms of biological role, specifically methylates the N4 position of cytidine in position 1402 (C1402) of 16S rRNA. This chain is Ribosomal RNA small subunit methyltransferase H, found in Photorhabdus laumondii subsp. laumondii (strain DSM 15139 / CIP 105565 / TT01) (Photorhabdus luminescens subsp. laumondii).